The chain runs to 251 residues: Octanoyltransferase (251 aa).

The BPL/LPL catalytic domain occupies alanine 56 to aspartate 241. Residues arginine 96–histidine 103, alanine 168–glycine 170, and glycine 181–serine 183 each bind substrate. Cysteine 199 (acyl-thioester intermediate) is an active-site residue.

Belongs to the LipB family.

The protein resides in the cytoplasm. The catalysed reaction is octanoyl-[ACP] + L-lysyl-[protein] = N(6)-octanoyl-L-lysyl-[protein] + holo-[ACP] + H(+). The protein operates within protein modification; protein lipoylation via endogenous pathway; protein N(6)-(lipoyl)lysine from octanoyl-[acyl-carrier-protein]: step 1/2. Its function is as follows. Catalyzes the transfer of endogenously produced octanoic acid from octanoyl-acyl-carrier-protein onto the lipoyl domains of lipoate-dependent enzymes. Lipoyl-ACP can also act as a substrate although octanoyl-ACP is likely to be the physiological substrate. This chain is Octanoyltransferase, found in Burkholderia orbicola (strain AU 1054).